The primary structure comprises 607 residues: Chaperone protein DnaK (607 aa).

Thr-174 bears the Phosphothreonine; by autocatalysis mark. Residues 579–592 (AQAQAQQQAGANAG) are compositionally biased toward low complexity. The disordered stretch occupies residues 579-607 (AQAQAQQQAGANAGSDKKDEDVAEAEVVD).

It belongs to the heat shock protein 70 family.

Its function is as follows. Acts as a chaperone. This chain is Chaperone protein DnaK, found in Fusobacterium nucleatum subsp. nucleatum (strain ATCC 25586 / DSM 15643 / BCRC 10681 / CIP 101130 / JCM 8532 / KCTC 2640 / LMG 13131 / VPI 4355).